Here is a 229-residue protein sequence, read N- to C-terminus: Large ribosomal subunit protein uL1 (229 aa).

It belongs to the universal ribosomal protein uL1 family. As to quaternary structure, part of the 50S ribosomal subunit.

Functionally, binds directly to 23S rRNA. The L1 stalk is quite mobile in the ribosome, and is involved in E site tRNA release. Its function is as follows. Protein L1 is also a translational repressor protein, it controls the translation of the L11 operon by binding to its mRNA. The protein is Large ribosomal subunit protein uL1 of Rhodopseudomonas palustris (strain HaA2).